Here is a 104-residue protein sequence, read N- to C-terminus: MKFLIVFVALFAMAVARPNLAEIVRQVSDVEPEKWSSDVETSDGTSIKQEGVLKNAGTDNEAAVVHGSFTWVDEKTGEKFTITYVADENGYQPQGAHLPVAPVA.

The N-terminal stretch at 1–18 (MKFLIVFVALFAMAVARP) is a signal peptide. The region spanning 32–102 (PEKWSSDVET…PQGAHLPVAP (71 aa)) is the Chitin-binding type R&amp;R domain.

Its function is as follows. Component of the cuticle of the larva. The chain is Larval cuticle protein 65Ab1 from Drosophila melanogaster (Fruit fly).